Consider the following 585-residue polypeptide: MAARFELLDDLPAACLSPCGPPNPTELFSEARRLALEQLLAGGPDAWAAFLRRERLGRFLNADEVREVLGAAERPGEDGAAVAEDSFGSSHECSSGTYFPEQSDLEPPALELGWPSFYQGAYRGATRVEAHFQPRGAGAGGPYGCKDALRQQLRSAREVIAVVMDVFSDIDIFRDLQESCRKRGVAVYILLDQTLLPHFLDMCMDLRVHPEQEKLMTVRTITGNIYYARSGTKVVGKVHEKFTLIDGIRVATGSYSFTWTDGKLNSSNLVILSGQVVEHFDLEFRILYAQSEPISSKLLSNFQINSKFDHLADRKPQSKEPTLGNLLRMRLARLSSTPRKSNLGPEEPPKDRAKPKRPDSEASTISDEDYFHSHKDQLEDSKVADAATQTEPREEMAAVSLSEVGTQTSSSMMCVGTQTTVVTRAASSQATVWSKSTTTQTEADESFLPQGAQSKEGSPASKMSVSRSSSVRSSSSVSSQGSLASSVSSHVSLTAADLHTPAYPKYLGLGTPHLDLCLRDSFRNLSKERQVHFTGIRSRLTQMLTVLSRRTLFTEHYLSYSPGSFTRASTNLVSVRDIALYPPYQ.

Residues Met-1–Ser-296 are DUF1669. Position 295 is a phosphoserine (Ser-295). 2 disordered regions span residues Leu-334–Ser-411 and Ala-425–Ser-482. The tract at residues Thr-337–Gln-585 is required for interaction with KIF22 and function in chromosome congression. Basic and acidic residues-rich tracts occupy residues Glu-347–Ser-360 and Asp-369–Val-383. Residues Ala-425–Thr-441 are compositionally biased toward polar residues. Residue Ser-458 is modified to Phosphoserine. Positions Ser-458 to Ser-482 are enriched in low complexity. Thr-511 bears the Phosphothreonine mark.

This sequence belongs to the FAM83 family. Interacts with FBXW7; promotes FBXW7 degradation. May interact with RAF1. Interacts with KIF22; recruits KIF22 to mitotic spindle microtubules. Interacts (via C-terminus) with DYNLL1. Interacts with HMMR. Directly interacts (via DUF1669) with CSNK1A1 and CSNK1A1L. In terms of processing, phosphorylated during mitosis.

It localises to the cytoplasm. The protein localises to the cytoskeleton. The protein resides in the spindle. It is found in the spindle pole. Its function is as follows. Through the degradation of FBXW7, may act indirectly on the expression and downstream signaling of MTOR, JUN and MYC. May play also a role in cell proliferation through activation of the ERK1/ERK2 signaling cascade. May also be important for proper chromosome congression and alignment during mitosis through its interaction with KIF22. The protein is Protein FAM83D of Mus musculus (Mouse).